Here is a 1152-residue protein sequence, read N- to C-terminus: Receptor-type guanylate cyclase gcy-8 (1152 aa).

Positions 1–21 (MRTKKAFLLLTFNVLIYLAAC) are cleaved as a signal peptide. The Extracellular portion of the chain corresponds to 22–506 (QETERILANN…GYRNERCDYT (485 aa)). Asn31, Asn55, Asn385, and Asn465 each carry an N-linked (GlcNAc...) asparagine glycan. The chain crosses the membrane as a helical span at residues 507–527 (LIIIGAALILLFIVAAVSAFF). The Cytoplasmic portion of the chain corresponds to 528 to 1152 (AQKILEKRAL…NLKNPTGLQR (625 aa)). The Protein kinase domain maps to 567 to 857 (RTKMSNMNYG…RIKLNVETYL (291 aa)). ATP is bound by residues 573-581 (MNYGSRNHA) and Lys593. A coiled-coil region spans residues 861–899 (GSLVDQMTRMMEQYANNLEKLVAERTGMLEEANQRADRL). The Guanylate cyclase domain maps to 927-1057 (TVLFSDIVGF…DTVNMASRME (131 aa)). The Mg(2+) site is built by Asp932, Ile933, and Asp976.

The protein belongs to the adenylyl cyclase class-4/guanylyl cyclase family. In terms of tissue distribution, expressed bilaterally in AFD sensory neurons.

The protein resides in the cell membrane. It is found in the cell projection. The protein localises to the cilium. The catalysed reaction is GTP = 3',5'-cyclic GMP + diphosphate. Inhibited by chloride with an IC(50) of 60 mM. Its function is as follows. Guanylate cyclase involved in the production of the second messenger cGMP. Regulates thermotaxis responses in AFD sensory neurons. May regulate AFD neuronal activity such as calcium responses to temperature gradients. Maintains the microvilli receptive ending morphology of the AFD thermosensory neurons by regulating cGMP levels downstream of kcc-3. cGMP levels antagonize the actin cytoskeleton regulator wsp-1. The chain is Receptor-type guanylate cyclase gcy-8 from Caenorhabditis elegans.